Consider the following 350-residue polypeptide: Twinfilin-1 (350 aa).

Ser-2 carries the N-acetylserine modification. Residues Ser-2–Leu-139 enclose the ADF-H 1 domain. Residues Ser-143 and Ser-277 each carry the phosphoserine modification. Residues Leu-175 to His-313 enclose the ADF-H 2 domain. Tyr-309 is modified (phosphotyrosine). Residues Gln-316–Asp-350 form a disordered region. Thr-349 bears the Phosphothreonine mark.

The protein belongs to the actin-binding proteins ADF family. Twinfilin subfamily. Interacts with G-actin; ADP-actin form and capping protein (CP). May also be able to interact with TWF2 and phosphoinositides, PI(4,5)P2. When bound to PI(4,5)P2, it is down-regulated. Interacts with ACTG1. Post-translationally, phosphorylated on serine and threonine residues. In terms of tissue distribution, expressed at high levels in the colon, testis, ovary, prostate and lung. Expressed at lower levels in the brain, bladder and heart. Not detected in liver.

It is found in the cytoplasm. Its subcellular location is the cytoskeleton. In terms of biological role, actin-binding protein involved in motile and morphological processes. Inhibits actin polymerization, likely by sequestering G-actin. By capping the barbed ends of filaments, it also regulates motility. Seems to play an important role in clathrin-mediated endocytosis and distribution of endocytic organelles. The sequence is that of Twinfilin-1 (TWF1) from Homo sapiens (Human).